The following is a 1020-amino-acid chain: Protein translocase subunit SecA (1020 aa).

ATP-binding positions include Gln-143, 161 to 165 (GEGKT), and Asp-661. The interval 974 to 1020 (SVYNASPGAENEAPLQRPVTADSKPGRNDPCPCGSGKKYKNCHGQQP) is disordered. Zn(2+)-binding residues include Cys-1004, Cys-1006, Cys-1015, and His-1016.

It belongs to the SecA family. Monomer and homodimer. Part of the essential Sec protein translocation apparatus which comprises SecA, SecYEG and auxiliary proteins SecDF. Other proteins may also be involved. It depends on Zn(2+) as a cofactor.

Its subcellular location is the cell inner membrane. The protein localises to the cytoplasm. The enzyme catalyses ATP + H2O + cellular proteinSide 1 = ADP + phosphate + cellular proteinSide 2.. Its function is as follows. Part of the Sec protein translocase complex. Interacts with the SecYEG preprotein conducting channel. Has a central role in coupling the hydrolysis of ATP to the transfer of proteins into and across the cell membrane, serving as an ATP-driven molecular motor driving the stepwise translocation of polypeptide chains across the membrane. This is Protein translocase subunit SecA from Chlorobium phaeovibrioides (strain DSM 265 / 1930) (Prosthecochloris vibrioformis (strain DSM 265)).